The following is a 476-amino-acid chain: Probable periplasmic serine endoprotease DegP-like (476 aa).

A signal peptide spans 1 to 27 (MSIPRLKSYFTILATVLVLGQAVSAQA). Residues His116, Asp146, and Ser219 each act as charge relay system in the active site. Substrate-binding positions include 217-219 (GNS) and 274-278 (LGVVI). PDZ domains are found at residues 263–354 (LKTG…IRDG) and 360–465 (ELTV…LRQG).

The protein belongs to the peptidase S1C family.

Its subcellular location is the periplasm. It catalyses the reaction Acts on substrates that are at least partially unfolded. The cleavage site P1 residue is normally between a pair of hydrophobic residues, such as Val-|-Val.. In terms of biological role, might be efficient in the degradation of transiently denatured and unfolded proteins which accumulate in the periplasm following stress conditions. This Pseudomonas fluorescens (strain ATCC BAA-477 / NRRL B-23932 / Pf-5) protein is Probable periplasmic serine endoprotease DegP-like (mucD).